We begin with the raw amino-acid sequence, 399 residues long: Organelle RRM domain-containing protein 1, chloroplastic (399 aa).

The N-terminal 52 residues, Met1 to Ser52, are a transit peptide targeting the chloroplast. Positions Lys295 to His373 constitute an RRM domain. The segment at Asp377 to Gly399 is disordered.

The protein localises to the plastid. Its subcellular location is the chloroplast. In terms of biological role, involved in C-to-U editing of chloroplastic RNA. Functions as major chloroplastic editing factor. Controls a majority of the chloroplastic editing sites. In Oryza sativa subsp. japonica (Rice), this protein is Organelle RRM domain-containing protein 1, chloroplastic.